A 201-amino-acid polypeptide reads, in one-letter code: UPF0301 protein MMAR_0053 (201 aa).

This sequence belongs to the UPF0301 (AlgH) family.

The chain is UPF0301 protein MMAR_0053 from Mycobacterium marinum (strain ATCC BAA-535 / M).